A 510-amino-acid polypeptide reads, in one-letter code: Probable ADP-ribosylation factor-binding protein C1F3.05 (510 aa).

The VHS domain occupies 14-150 (ATDQFNLEPN…LMAFRGYKFP (137 aa)). In terms of domain architecture, GAT spans 177-301 (LEAHKAKLQE…VIEECSNSDL (125 aa)). The GAE domain maps to 391–510 (TNSSLTSILQ…VEQGESHLPL (120 aa)).

The protein resides in the golgi apparatus. The protein localises to the trans-Golgi network. Functionally, may play a role in the regulation of membrane traffic through the trans-Golgi network. The polypeptide is Probable ADP-ribosylation factor-binding protein C1F3.05 (Schizosaccharomyces pombe (strain 972 / ATCC 24843) (Fission yeast)).